Here is a 56-residue protein sequence, read N- to C-terminus: Large ribosomal subunit protein bL33 (56 aa).

It belongs to the bacterial ribosomal protein bL33 family.

The sequence is that of Large ribosomal subunit protein bL33 from Helicobacter hepaticus (strain ATCC 51449 / 3B1).